A 217-amino-acid polypeptide reads, in one-letter code: 3,4-dihydroxy-2-butanone 4-phosphate synthase (217 aa).

Residues 37 to 38 (RE), Asp-42, 150 to 154 (RRGHT), and Glu-174 contribute to the D-ribulose 5-phosphate site. Mg(2+) is bound at residue Glu-38. His-153 provides a ligand contact to Mg(2+).

It belongs to the DHBP synthase family. In terms of assembly, homodimer. It depends on Mg(2+) as a cofactor. The cofactor is Mn(2+).

The catalysed reaction is D-ribulose 5-phosphate = (2S)-2-hydroxy-3-oxobutyl phosphate + formate + H(+). The protein operates within cofactor biosynthesis; riboflavin biosynthesis; 2-hydroxy-3-oxobutyl phosphate from D-ribulose 5-phosphate: step 1/1. In terms of biological role, catalyzes the conversion of D-ribulose 5-phosphate to formate and 3,4-dihydroxy-2-butanone 4-phosphate. The chain is 3,4-dihydroxy-2-butanone 4-phosphate synthase from Tolumonas auensis (strain DSM 9187 / NBRC 110442 / TA 4).